We begin with the raw amino-acid sequence, 492 residues long: Trk system potassium uptake protein TrkI (492 aa).

10 helical membrane passes run 20-40, 47-67, 81-101, 143-163, 196-216, 246-266, 282-302, 334-354, 403-423, and 465-485; these read VLAV…LVLI, ALAF…SWIV, FVLT…PLVL, IMQW…LPFL, IYCG…MSPL, QLLW…VLYI, VQGL…WRVS, AWGA…GCSG, VVAF…GLSL, and WLLC…LVLL.

It belongs to the TrkH potassium transport family.

It localises to the cell inner membrane. Medium-affinity potassium transport system. Probably interacts with Trk system potassium uptake protein TrkA. Main K(+) transporter in osmotically adapted cells. This chain is Trk system potassium uptake protein TrkI (trkI), found in Halomonas elongata (strain ATCC 33173 / DSM 2581 / NBRC 15536 / NCIMB 2198 / 1H9).